Reading from the N-terminus, the 77-residue chain is Chaplin-H (77 aa).

Positions 1–25 (MLKKVVAAAAATGGLVLAGAGMAVA) are cleaved as a signal peptide. In terms of domain architecture, Chaplin spans 36–76 (SPGVLSGNVVQVPVHVPVNVCGNTISVIGLLNPAFGNVCIN). Forms amyloid fibrils in vitro regions lie at residues 38–54 (GVLSGNVVQVPVHVPVN) and 57–72 (GNTISVIGLLNPAFGN). A disulfide bond links Cys-56 and Cys-74.

Belongs to the chaplin family. Short chaplin subfamily. In terms of assembly, homodimer; disulfide linked. About 10% of ChpH isolated from cell wall forms disulfide-bonded homodimers.

The protein resides in the cell surface. The protein localises to the secreted. Its subcellular location is the cell wall. It is found in the fimbrium. In terms of biological role, one of 8 partially redundant surface-active proteins required for efficient formation of aerial mycelium; the short chaplins assemble into a hydrophobic, amyloidal fibrillar surface layer that envelopes and protects aerial hyphae and spores, presumably anchored to the long chaplins. Chaplins have an overlapping function with the surface-active SapB peptide; chaplins are essential on minimal medium while on rich medium both chaplins and SapB are required for efficient aerial hyphae formation. Chaplins are also involved in cell attachment to a hydrophobic surface. Forms amyloid fibrils in vitro probably composed of stacked beta-sheets. A small chaplin extract (ChpD, ChpE, ChpF, ChpG and ChpH) self-assembles into 2 different amyloids; small fibrils at the air-water interface form an amphipathic membrane that resembles spore-surface structures involved in aerial hyphae formation, and hydrophilic fibrils in solution that resemble the fibers that attach cells to a hydrophobic surface. At the air-water interface the hydrophilic surface is in contact with water (probably equivalent to the peptidoglycan layer), while the hydrophobic face is exposed to the air, making the surface of the aerial hyphae hydrophobic. A minimal chaplin strain capable of forming aerial mycelium/hyphae on minimal medium contains ChpC, ChpE and ChpH. The strain also has restored rodlet formation on the hyphae surface. A small chaplin extract applied to a chaplin-deficient strain restores aerial hyphae formation. The small chaplin extract forms an amyloid-like structure similar to that seen on the surface of cells without rodlets (rdlA-rdlB deletions), and is highly surface active, reducing surface tension from 72 to 26 mJ/m(2), which probably allows escape of hyphae from an aqueous environment into air. The sequence is that of Chaplin-H from Streptomyces coelicolor (strain ATCC BAA-471 / A3(2) / M145).